Reading from the N-terminus, the 72-residue chain is Translation initiation factor IF-1 (72 aa).

The region spanning 1–72 (MSKEELIEFE…TKGRITYRFK (72 aa)) is the S1-like domain.

Belongs to the IF-1 family. In terms of assembly, component of the 30S ribosomal translation pre-initiation complex which assembles on the 30S ribosome in the order IF-2 and IF-3, IF-1 and N-formylmethionyl-tRNA(fMet); mRNA recruitment can occur at any time during PIC assembly.

It is found in the cytoplasm. Functionally, one of the essential components for the initiation of protein synthesis. Stabilizes the binding of IF-2 and IF-3 on the 30S subunit to which N-formylmethionyl-tRNA(fMet) subsequently binds. Helps modulate mRNA selection, yielding the 30S pre-initiation complex (PIC). Upon addition of the 50S ribosomal subunit IF-1, IF-2 and IF-3 are released leaving the mature 70S translation initiation complex. This is Translation initiation factor IF-1 from Hyphomonas neptunium (strain ATCC 15444).